Here is a 789-residue protein sequence, read N- to C-terminus: Toll-like receptor 6 (789 aa).

Residues Met1 to Ala31 form the signal peptide. The Extracellular segment spans residues Asp32 to Thr587. LRR repeat units lie at residues Thr54 to Gly77, Leu78 to Asp101, Leu102 to Asn122, Leu123 to Gln147, Leu148 to His168, Leu169 to Thr196, Lys197 to Thr219, Leu220 to Ser250, Leu251 to Pro277, Val278 to Ala303, Leu304 to Glu330, Met331 to Thr354, Phe355 to Glu378, Leu379 to Ser404, Leu405 to Ser428, Ile429 to Pro449, Arg450 to Thr473, Leu474 to Ser495, and Leu496 to Asn519. Cys117 and Cys139 are oxidised to a cystine. Asn144 carries an N-linked (GlcNAc...) asparagine glycan. N-linked (GlcNAc...) asparagine glycosylation is found at Asn186 and Asn214. An intrachain disulfide couples Cys235 to Cys265. N-linked (GlcNAc...) asparagine glycosylation is found at Asn253 and Asn285. Cys348 and Cys373 form a disulfide bridge. Asn372 carries N-linked (GlcNAc...) asparagine glycosylation. Residues Cys423 and Cys446 are joined by a disulfide bond. The N-linked (GlcNAc...) asparagine glycan is linked to Asn433. Residue Asn519 is glycosylated (N-linked (GlcNAc...) asparagine). The LRRCT domain occupies Ile520 to His575. Residues Val588–Leu608 traverse the membrane as a helical segment. Residues Asp609–Lys789 lie on the Cytoplasmic side of the membrane. Residues Leu639 to Ile780 enclose the TIR domain.

It belongs to the Toll-like receptor family. Homodimer (via cytoplasmic TIR domain). Heterodimer with TLR2 via their respective extracellular domains. Binds MYD88 via their respective TIR domains. Interacts with CD36, following CD36 stimulation by oxLDL or amyloid-beta 42, and forms a heterodimer with TLR4. The trimeric complex is internalized and triggers inflammatory response. LYN kinase activity facilitates TLR4:TLR6 heterodimerization and signal initiation. The heterodimer TLR2:TLR6 interacts with CD14 and CD36 in response to triacylated lipopeptides.

Its subcellular location is the cell membrane. It is found in the cytoplasmic vesicle. It localises to the phagosome membrane. The protein localises to the membrane raft. The protein resides in the golgi apparatus. Participates in the innate immune response to Gram-positive bacteria and fungi. Specifically recognizes diacylated and, to a lesser extent, triacylated lipopeptides. In response to diacylated lipopeptides, forms the activation cluster TLR2:TLR6:CD14:CD36, this cluster triggers signaling from the cell surface and subsequently is targeted to the Golgi in a lipid-raft dependent pathway. Acts via MYD88 and TRAF6, leading to NF-kappa-B activation, cytokine secretion and the inflammatory response. Recognizes mycoplasmal macrophage-activating lipopeptide-2kD (MALP-2), soluble tuberculosis factor (STF), phenol-soluble modulin (PSM) and B.burgdorferi outer surface protein A lipoprotein (OspA-L) cooperatively with TLR2. In complex with TLR4, promotes sterile inflammation in monocytes/macrophages in response to oxidized low-density lipoprotein (oxLDL) or amyloid-beta 42. In this context, the initial signal is provided by oxLDL- or amyloid-beta 42-binding to CD36. This event induces the formation of a heterodimer of TLR4 and TLR6, which is rapidly internalized and triggers inflammatory response, leading to the NF-kappa-B-dependent production of CXCL1, CXCL2 and CCL9 cytokines, via MYD88 signaling pathway, and CCL5 cytokine, via TICAM1 signaling pathway, as well as IL1B secretion. This chain is Toll-like receptor 6 (TLR6), found in Dasypus novemcinctus (Nine-banded armadillo).